The primary structure comprises 302 residues: Sulfate adenylyltransferase subunit 2 (302 aa).

Residues 280-302 (RQGRLIDSDQSASMEQKKRQGYF) form a disordered region.

This sequence belongs to the PAPS reductase family. CysD subfamily. As to quaternary structure, heterodimer composed of CysD, the smaller subunit, and CysN.

The catalysed reaction is sulfate + ATP + H(+) = adenosine 5'-phosphosulfate + diphosphate. The protein operates within sulfur metabolism; hydrogen sulfide biosynthesis; sulfite from sulfate: step 1/3. Functionally, with CysN forms the ATP sulfurylase (ATPS) that catalyzes the adenylation of sulfate producing adenosine 5'-phosphosulfate (APS) and diphosphate, the first enzymatic step in sulfur assimilation pathway. APS synthesis involves the formation of a high-energy phosphoric-sulfuric acid anhydride bond driven by GTP hydrolysis by CysN coupled to ATP hydrolysis by CysD. In Shewanella baltica (strain OS195), this protein is Sulfate adenylyltransferase subunit 2.